A 281-amino-acid chain; its full sequence is N-acetylmuramic acid 6-phosphate etherase (281 aa).

The SIS domain maps to 63-226 (IVPRMKQGGR…TTSVMIQLGR (164 aa)). The active-site Proton donor is Glu-91. Residue Glu-122 is part of the active site.

This sequence belongs to the GCKR-like family. MurNAc-6-P etherase subfamily. In terms of assembly, homodimer.

It catalyses the reaction N-acetyl-D-muramate 6-phosphate + H2O = N-acetyl-D-glucosamine 6-phosphate + (R)-lactate. It functions in the pathway amino-sugar metabolism; N-acetylmuramate degradation. Its function is as follows. Specifically catalyzes the cleavage of the D-lactyl ether substituent of MurNAc 6-phosphate, producing GlcNAc 6-phosphate and D-lactate. The polypeptide is N-acetylmuramic acid 6-phosphate etherase (Bacteroides fragilis (strain YCH46)).